Here is a 208-residue protein sequence, read N- to C-terminus: Putative dioxygenase RF_0617 (208 aa).

This sequence belongs to the intradiol ring-cleavage dioxygenase family.

The protein is Putative dioxygenase RF_0617 of Rickettsia felis (strain ATCC VR-1525 / URRWXCal2) (Rickettsia azadi).